The following is a 472-amino-acid chain: Argininosuccinate lyase (472 aa).

This sequence belongs to the lyase 1 family. Argininosuccinate lyase subfamily.

Its subcellular location is the cytoplasm. The catalysed reaction is 2-(N(omega)-L-arginino)succinate = fumarate + L-arginine. Its pathway is amino-acid biosynthesis; L-arginine biosynthesis; L-arginine from L-ornithine and carbamoyl phosphate: step 3/3. The chain is Argininosuccinate lyase from Rhodococcus jostii (strain RHA1).